The primary structure comprises 76 residues: Large ribosomal subunit protein eL20 (76 aa).

It belongs to the eukaryotic ribosomal protein eL20 family. In terms of assembly, part of the 50S ribosomal subunit. Binds 23S rRNA.

The polypeptide is Large ribosomal subunit protein eL20 (Methanocaldococcus jannaschii (strain ATCC 43067 / DSM 2661 / JAL-1 / JCM 10045 / NBRC 100440) (Methanococcus jannaschii)).